Here is a 322-residue protein sequence, read N- to C-terminus: Glycerol-3-phosphate dehydrogenase [NAD(P)+] (322 aa).

4 residues coordinate NADPH: tryptophan 11, arginine 31, arginine 32, and lysine 101. Sn-glycerol 3-phosphate-binding residues include lysine 101 and glycine 130. Alanine 134 is an NADPH binding site. Sn-glycerol 3-phosphate-binding residues include lysine 184, aspartate 237, serine 247, arginine 248, and asparagine 249. Lysine 184 serves as the catalytic Proton acceptor. Arginine 248 contacts NADPH. 2 residues coordinate NADPH: valine 270 and glutamate 272.

It belongs to the NAD-dependent glycerol-3-phosphate dehydrogenase family.

It localises to the cytoplasm. The enzyme catalyses sn-glycerol 3-phosphate + NAD(+) = dihydroxyacetone phosphate + NADH + H(+). The catalysed reaction is sn-glycerol 3-phosphate + NADP(+) = dihydroxyacetone phosphate + NADPH + H(+). The protein operates within membrane lipid metabolism; glycerophospholipid metabolism. Functionally, catalyzes the reduction of the glycolytic intermediate dihydroxyacetone phosphate (DHAP) to sn-glycerol 3-phosphate (G3P), the key precursor for phospholipid synthesis. In Thermus thermophilus (strain ATCC BAA-163 / DSM 7039 / HB27), this protein is Glycerol-3-phosphate dehydrogenase [NAD(P)+].